The sequence spans 739 residues: Potassium transporter 26 (739 aa).

Over 1-81 the chain is Cytoplasmic; sequence MEYHHRPHSP…RQVALLSFQS (81 aa). A helical transmembrane segment spans residues 82-102; sequence LGVVYGDLGTSPLYVFSSISL. The Extracellular segment spans residues 103-112; sequence DDPGEADFVG. A helical membrane pass occupies residues 113-133; the sequence is ILSIILWTFTMICLVKYVFIV. Residues 134–198 lie on the Cytoplasmic side of the membrane; sequence LKADDHGEGG…KFLEQSTKWQ (65 aa). Residues 199 to 219 traverse the membrane as a helical segment; it reads AVITYIVLAGTCMVLGDGALT. At 220 to 236 the chain is on the extracellular side; sequence PAISVLSAVQGIQSRSS. A helical transmembrane segment spans residues 237–257; that stretch reads SITQAHVVLLSVIILFILFFF. Residues 258 to 268 lie on the Cytoplasmic side of the membrane; sequence QKHGTSKVSFT. The helical transmembrane segment at 269-289 threads the bilayer; it reads FSPIMILWFTFVAFIGLYNII. Over 290 to 318 the chain is Extracellular; sequence KHYPPILKAVSPHYIIIYFIRNKRAAWET. Residues 319–339 form a helical membrane-spanning segment; sequence LGAIVLCITGAEAMFADLGHF. The Cytoplasmic portion of the chain corresponds to 340–347; the sequence is NKSSIQMA. Residues 348–368 form a helical membrane-spanning segment; sequence FSVIVYPSMILAYAGQAAFLV. The Extracellular portion of the chain corresponds to 369–385; it reads KNPSKLSTTFYSSTPEP. Residues 386-406 form a helical membrane-spanning segment; it reads LFWPMFIIATLAAIVASQALI. The Cytoplasmic segment spans residues 407–437; that stretch reads SASFSIIRQSIALGCFPRVTMKHTSGKHEGQ. Residues 438–458 traverse the membrane as a helical segment; that stretch reads VYSPEINYFLMVACILITVGF. Residues 459–469 lie on the Extracellular side of the membrane; the sequence is KGGPEIGQAFG. Residues 470 to 490 form a helical membrane-spanning segment; that stretch reads VAVIFVMLFTTNLMTVVMLII. Topologically, residues 491–494 are cytoplasmic; it reads WESN. Residues 495–515 traverse the membrane as a helical segment; sequence IALASLFFVFFFSIEGIYMTS. Over 516–519 the chain is Extracellular; it reads LMNK. The helical transmembrane segment at 520-540 threads the bilayer; it reads ILQGGWVPFAITAFFLIITLS. The Cytoplasmic portion of the chain corresponds to 541-739; it reads WTYGRSKKGE…TLQVGMLYEI (199 aa).

The protein belongs to the HAK/KUP transporter (TC 2.A.72.3) family.

Its subcellular location is the membrane. High-affinity potassium transporter. The chain is Potassium transporter 26 (HAK26) from Oryza sativa subsp. japonica (Rice).